We begin with the raw amino-acid sequence, 526 residues long: Exodeoxyribonuclease 7 large subunit (526 aa).

Positions 499–526 (AGEDGTPSQAPKKRPARAGEPTKQGSLF) are disordered.

It belongs to the XseA family. As to quaternary structure, heterooligomer composed of large and small subunits.

The protein resides in the cytoplasm. The enzyme catalyses Exonucleolytic cleavage in either 5'- to 3'- or 3'- to 5'-direction to yield nucleoside 5'-phosphates.. Its function is as follows. Bidirectionally degrades single-stranded DNA into large acid-insoluble oligonucleotides, which are then degraded further into small acid-soluble oligonucleotides. The chain is Exodeoxyribonuclease 7 large subunit from Sinorhizobium medicae (strain WSM419) (Ensifer medicae).